An 87-amino-acid polypeptide reads, in one-letter code: Cytochrome c oxidase subunit 6B1 (87 aa).

The region spanning 28–74 is the CHCH domain; it reads TRNCWQNYLDFHRCQKAMTTKGGNVSVCEWYQRVYQSLCPTSWVTDW. The short motif at 31–41 is the Cx9C motif element; sequence CWQNYLDFHRC. 2 cysteine pairs are disulfide-bonded: Cys-31–Cys-66 and Cys-41–Cys-55. A Cx10C motif motif is present at residues 55 to 66; it reads CEWYQRVYQSLC.

It localises to the mitochondrion intermembrane space. In terms of biological role, connects the two COX monomers into the physiological dimeric form. This chain is Cytochrome c oxidase subunit 6B1 (COX6B1), found in Macaca fascicularis (Crab-eating macaque).